Consider the following 204-residue polypeptide: MTKRTESKYKINRRLGVNLWGRPKSPINKREYGPGQHGQRRKKPSDFGVQLMAKQKLRGYYGNISEKQFYKYYEEAVRRRGDTSENLIELLERRLDAVVYRMKFAITPFAARQFVSHGHVLVNGRRVNISSYQVRDGDVVEVREKSKQLAMVLDSVQSAERDVPEYIEVDHRAMKGTFARAPKLADVPYPVQMEPNLVVEFYSR.

A disordered region spans residues 21–45 (GRPKSPINKREYGPGQHGQRRKKPS). One can recognise an S4 RNA-binding domain in the interval 93–156 (RRLDAVVYRM…KQLAMVLDSV (64 aa)).

The protein belongs to the universal ribosomal protein uS4 family. Part of the 30S ribosomal subunit. Contacts protein S5. The interaction surface between S4 and S5 is involved in control of translational fidelity.

Its function is as follows. One of the primary rRNA binding proteins, it binds directly to 16S rRNA where it nucleates assembly of the body of the 30S subunit. With S5 and S12 plays an important role in translational accuracy. The sequence is that of Small ribosomal subunit protein uS4 from Acidiphilium cryptum (strain JF-5).